Reading from the N-terminus, the 484-residue chain is Ectonucleoside triphosphate diphosphohydrolase 6 (484 aa).

At M1–R39 the chain is on the cytoplasmic side. Residues V40–I60 traverse the membrane as a helical; Signal-anchor for type II membrane protein segment. The Lumenal segment spans residues K61–S484. The N-linked (GlcNAc...) asparagine glycan is linked to N220. E224 functions as the Proton acceptor in the catalytic mechanism. Residue N284 is glycosylated (N-linked (GlcNAc...) asparagine). Cystine bridges form between C325/C356 and C416/C430.

The protein belongs to the GDA1/CD39 NTPase family. As to quaternary structure, monomer. Ca(2+) serves as cofactor. The cofactor is Mg(2+). Post-translationally, the secreted form may be produced by intracellular processing. N-glycosylated. Expressed in most tissues, but predominantly in heart.

Its subcellular location is the golgi apparatus membrane. The protein localises to the secreted. It localises to the cell membrane. It catalyses the reaction a ribonucleoside 5'-diphosphate + H2O = a ribonucleoside 5'-phosphate + phosphate + H(+). The catalysed reaction is IDP + H2O = IMP + phosphate + H(+). It carries out the reaction GDP + H2O = GMP + phosphate + H(+). The enzyme catalyses UDP + H2O = UMP + phosphate + H(+). With respect to regulation, glycosylation does not appear to be required for enzymatic activity. Its function is as follows. Catalyzes the hydrolysis of nucleoside triphosphates and diphosphates in a calcium- or magnesium-dependent manner. Has a strong preference for nucleoside diphosphates, preferentially hydrolyzes GDP, IDP, and UDP, with slower hydrolysis of CDP, ITP, GTP, CTP, ADP, and UTP and virtually no hydrolysis of ATP. The membrane bound form might support glycosylation reactions in the Golgi apparatus and, when released from cells, might catalyze the hydrolysis of extracellular nucleotides. This chain is Ectonucleoside triphosphate diphosphohydrolase 6 (ENTPD6), found in Homo sapiens (Human).